Reading from the N-terminus, the 760-residue chain is BMP/retinoic acid-inducible neural-specific protein 1 (760 aa).

A signal peptide spans 1 to 16 (MNWRFVELLYFLFVWG). The 184-residue stretch at 68–251 (RYKIYREFAR…FVQSALSYIM (184 aa)) folds into the MACPF domain. N-linked (GlcNAc...) asparagine glycans are attached at residues asparagine 156, asparagine 433, asparagine 443, asparagine 553, asparagine 599, asparagine 630, and asparagine 676.

It belongs to the BRINP family.

Its subcellular location is the cytoplasm. In terms of biological role, plays a role in neurogenesis and brain development. May suppress cell cycle progression in postmitotic neurons by inhibiting G1/S transition. The sequence is that of BMP/retinoic acid-inducible neural-specific protein 1 (Brinp1) from Rattus norvegicus (Rat).